The primary structure comprises 845 residues: Prickle-like protein 2 (845 aa).

The PET domain occupies Phe-18 to Thr-126. Ser-92 is modified (phosphoserine). LIM zinc-binding domains are found at residues Ala-128–Pro-193, Pro-193–Glu-253, and Glu-253–Asn-317. 2 disordered regions span residues Glu-314–Lys-346 and Tyr-483–Glu-546. Positions Gly-318–Gln-327 are enriched in polar residues. Phosphoserine is present on residues Ser-319, Ser-321, and Ser-322. 3 positions are modified to phosphothreonine: Thr-535, Thr-537, and Thr-540. Phosphoserine is present on residues Ser-544 and Ser-547. The segment at Ala-558–Gly-581 is disordered. Residues Ser-608 and Ser-643 each carry the phosphoserine modification. The disordered stretch occupies residues Gln-642–Leu-700. Over residues Phe-683–Arg-693 the composition is skewed to basic residues. At Ser-732 the chain carries Phosphoserine. The tract at residues Ser-823–Ser-845 is disordered. A Cysteine methyl ester modification is found at Cys-842. The S-farnesyl cysteine moiety is linked to residue Cys-842. Positions Ile-843–Ser-845 are cleaved as a propeptide — removed in mature form.

Belongs to the prickle / espinas / testin family. Expressed in the hippocampus and cerebral cortex.

The protein localises to the nucleus membrane. In Mus musculus (Mouse), this protein is Prickle-like protein 2 (Prickle2).